Here is a 203-residue protein sequence, read N- to C-terminus: 3-isopropylmalate dehydratase small subunit (203 aa).

The protein belongs to the LeuD family. LeuD type 1 subfamily. Heterodimer of LeuC and LeuD.

The enzyme catalyses (2R,3S)-3-isopropylmalate = (2S)-2-isopropylmalate. Its pathway is amino-acid biosynthesis; L-leucine biosynthesis; L-leucine from 3-methyl-2-oxobutanoate: step 2/4. Catalyzes the isomerization between 2-isopropylmalate and 3-isopropylmalate, via the formation of 2-isopropylmaleate. The sequence is that of 3-isopropylmalate dehydratase small subunit from Symbiobacterium thermophilum (strain DSM 24528 / JCM 14929 / IAM 14863 / T).